Consider the following 389-residue polypeptide: Very-long-chain 3-oxoacyl-CoA reductase (389 aa).

A helical membrane pass occupies residues 34–54 (IAVFLLAIGLFHVALKVVSYV). NADP(+) is bound by residues V80, D134, N162, Y239, K243, V272, and S274. Residue Y239 is the Proton donor of the active site. Residue K243 is the Lowers pKa of active site Tyr of the active site. The interval 359 to 389 (QAAGGVADPKNTTAAREGYATESLKNETLKH) is disordered.

This sequence belongs to the short-chain dehydrogenases/reductases (SDR) family.

It localises to the endoplasmic reticulum membrane. It catalyses the reaction a very-long-chain (3R)-3-hydroxyacyl-CoA + NADP(+) = a very-long-chain 3-oxoacyl-CoA + NADPH + H(+). Its pathway is lipid metabolism; fatty acid biosynthesis. Functionally, component of the microsomal membrane bound fatty acid elongation system, which produces the 26-carbon very long-chain fatty acids (VLCFA) from palmitate. Catalyzes the reduction of the 3-ketoacyl-CoA intermediate that is formed in each cycle of fatty acid elongation. VLCFAs serve as precursors for ceramide and sphingolipids. The sequence is that of Very-long-chain 3-oxoacyl-CoA reductase from Yarrowia lipolytica (strain CLIB 122 / E 150) (Yeast).